The sequence spans 695 residues: Elongation factor G 1 (695 aa).

Residues 5 to 280 (ARYRNIGIFA…AVVDYLPSPT (276 aa)) enclose the tr-type G domain. GTP-binding positions include 14 to 21 (AHVDAGKT), 78 to 82 (DTPGH), and 132 to 135 (NKLD).

Belongs to the TRAFAC class translation factor GTPase superfamily. Classic translation factor GTPase family. EF-G/EF-2 subfamily.

It localises to the cytoplasm. Catalyzes the GTP-dependent ribosomal translocation step during translation elongation. During this step, the ribosome changes from the pre-translocational (PRE) to the post-translocational (POST) state as the newly formed A-site-bound peptidyl-tRNA and P-site-bound deacylated tRNA move to the P and E sites, respectively. Catalyzes the coordinated movement of the two tRNA molecules, the mRNA and conformational changes in the ribosome. This chain is Elongation factor G 1, found in Pseudoalteromonas atlantica (strain T6c / ATCC BAA-1087).